The primary structure comprises 132 residues: Small ribosomal subunit protein uS8 (132 aa).

The protein belongs to the universal ribosomal protein uS8 family. As to quaternary structure, part of the 30S ribosomal subunit. Contacts proteins S5 and S12.

Its function is as follows. One of the primary rRNA binding proteins, it binds directly to 16S rRNA central domain where it helps coordinate assembly of the platform of the 30S subunit. The sequence is that of Small ribosomal subunit protein uS8 from Geotalea uraniireducens (strain Rf4) (Geobacter uraniireducens).